Reading from the N-terminus, the 43-residue chain is Protein PsbN (43 aa).

Residues 5–27 traverse the membrane as a helical segment; that stretch reads TLVXISISGSLVSFTGYALYTAF.

Belongs to the PsbN family.

It localises to the plastid. It is found in the chloroplast thylakoid membrane. In terms of biological role, may play a role in photosystem I and II biogenesis. The protein is Protein PsbN of Calycanthus floridus (Eastern sweetshrub).